An 83-amino-acid polypeptide reads, in one-letter code: Small ribosomal subunit protein uS17 (83 aa).

The protein belongs to the universal ribosomal protein uS17 family. As to quaternary structure, part of the 30S ribosomal subunit.

Functionally, one of the primary rRNA binding proteins, it binds specifically to the 5'-end of 16S ribosomal RNA. The protein is Small ribosomal subunit protein uS17 of Synechococcus sp. (strain RCC307).